Consider the following 212-residue polypeptide: Pyridoxine/pyridoxamine 5'-phosphate oxidase (212 aa).

FMN contacts are provided by residues 59-64 (RMVLMK), 74-75 (YS), K81, and Q103. K64 provides a ligand contact to substrate. Substrate contacts are provided by Y121 and R125. FMN contacts are provided by residues 138 to 139 (QS) and W183. A substrate-binding site is contributed by 189–191 (RLH). R193 contributes to the FMN binding site.

It belongs to the pyridoxamine 5'-phosphate oxidase family. As to quaternary structure, homodimer. It depends on FMN as a cofactor.

The enzyme catalyses pyridoxamine 5'-phosphate + O2 + H2O = pyridoxal 5'-phosphate + H2O2 + NH4(+). The catalysed reaction is pyridoxine 5'-phosphate + O2 = pyridoxal 5'-phosphate + H2O2. It participates in cofactor metabolism; pyridoxal 5'-phosphate salvage; pyridoxal 5'-phosphate from pyridoxamine 5'-phosphate: step 1/1. It functions in the pathway cofactor metabolism; pyridoxal 5'-phosphate salvage; pyridoxal 5'-phosphate from pyridoxine 5'-phosphate: step 1/1. Its function is as follows. Catalyzes the oxidation of either pyridoxine 5'-phosphate (PNP) or pyridoxamine 5'-phosphate (PMP) into pyridoxal 5'-phosphate (PLP). The chain is Pyridoxine/pyridoxamine 5'-phosphate oxidase from Rhodopseudomonas palustris (strain HaA2).